We begin with the raw amino-acid sequence, 126 residues long: Small ribosomal subunit protein uS11 (126 aa).

This sequence belongs to the universal ribosomal protein uS11 family. In terms of assembly, part of the 30S ribosomal subunit. Interacts with proteins S7 and S18. Binds to IF-3.

Functionally, located on the platform of the 30S subunit, it bridges several disparate RNA helices of the 16S rRNA. Forms part of the Shine-Dalgarno cleft in the 70S ribosome. In Treponema pallidum (strain Nichols), this protein is Small ribosomal subunit protein uS11.